A 175-amino-acid polypeptide reads, in one-letter code: Peptidyl-prolyl cis-trans isomerase B (175 aa).

Positions 3–172 (EQLYATLKTN…EDVVIESVVV (170 aa)) constitute a PPIase cyclophilin-type domain.

Belongs to the cyclophilin-type PPIase family.

The protein resides in the cytoplasm. It catalyses the reaction [protein]-peptidylproline (omega=180) = [protein]-peptidylproline (omega=0). Its activity is regulated as follows. Inhibited by cyclosporin A (CsA). PPIases accelerate the folding of proteins. It catalyzes the cis-trans isomerization of proline imidic peptide bonds in oligopeptides. This chain is Peptidyl-prolyl cis-trans isomerase B (cypB), found in Streptomyces anulatus (Streptomyces chrysomallus).